The primary structure comprises 496 residues: Flt3-interacting zinc finger protein 1 (496 aa).

The residue at position 1 (Met1) is an N-acetylmethionine. 6 consecutive C2H2-type zinc fingers follow at residues 23–45, 51–73, 79–101, 107–130, 200–222, and 228–250; these read FHCSECGKSFRYRSDLRRHFARH, HACPRCGKGFKHSFNLANHLRSH, YRCSACPKGFRDSTGLLHHQVVH, YCCLVCELRFSSRSSLGRHLKRQH, FACGACARRFDHGRELAAHWAAH, and FKCPRCERDFNAPALLERHKLTH. Residues 250–280 are disordered; it reads HDLQGPGAPPAQAWAAGPGAGPETAGEGTAA. The segment covering 259 to 280 has biased composition (low complexity); that stretch reads PAQAWAAGPGAGPETAGEGTAA. C2H2-type zinc fingers lie at residues 331 to 352, 358 to 381, 414 to 436, 442 to 464, and 470 to 492; these read YQCDCGTFFASAAALASHLEAH, YGCGHCGALYAALAALEEHRRVSH, FGCSECEKLFRSPRDLERHVLVH, FPCLECGKFFRHECYLKRHRLLH, and FPCHICGKGFITLSNLSRHLKLH. The segment at 378–412 is disordered; it reads RVSHGEGGGEEAATAAREREPASGEPPSGSGRGKK.

Interacts with FLT3 cytoplasmic catalytic domain, following receptor stimulation, in a kinase-independent manner. Does not interact with other structurally related receptor tyrosine kinases, including KIT, CSF1R and PDGFR. Interacts with NRL. As to expression, widely expressed.

The protein localises to the cytoplasm. Its subcellular location is the nucleus. Functionally, may be a transcriptional repressor of NRL function in photoreceptors. Does not repress CRX-mediated transactivation. In Homo sapiens (Human), this protein is Flt3-interacting zinc finger protein 1 (FIZ1).